Consider the following 642-residue polypeptide: Chaperone protein HtpG (642 aa).

The a; substrate-binding stretch occupies residues 1 to 349; that stretch reads MSAATETEVR…SADLPLNVSR (349 aa). Positions 216–238 are disordered; that stretch reads ELPPAPPAKEGEEPEPPKTPEWE. A compositionally biased stretch (basic and acidic residues) spans 224-236; sequence KEGEEPEPPKTPE. Positions 350–570 are b; sequence EILQQNRQVE…AHDMSATLER (221 aa). The segment at 571 to 642 is c; that stretch reads LLKEAGQEVP…VKRLNKLLMG (72 aa).

It belongs to the heat shock protein 90 family. Homodimer.

It is found in the cytoplasm. In terms of biological role, molecular chaperone. Has ATPase activity. In Magnetococcus marinus (strain ATCC BAA-1437 / JCM 17883 / MC-1), this protein is Chaperone protein HtpG.